The following is a 615-amino-acid chain: Cysteine-rich receptor-like protein kinase 1 (615 aa).

An N-terminal signal peptide occupies residues 1 to 28 (MQICASIAQFLAWVSFLVLLATVGSSSS). Gnk2-homologous domains are found at residues 29–131 (SESL…DRDF) and 137–237 (DPTF…THKF). The Extracellular portion of the chain corresponds to 29–266 (SESLLNCQPL…SFFPHLSDRD (238 aa)). Asn-100 and Asn-165 each carry an N-linked (GlcNAc...) asparagine glycan. The helical transmembrane segment at 267–287 (VTRLAIAAISLSILTSLGAFI) threads the bilayer. Over 288 to 615 (SYRRVSRKRK…VLMPDEETRV (328 aa)) the chain is Cytoplasmic. Residues 318–602 (FHDSMKLGQG…FEYPKQPPFL (285 aa)) form the Protein kinase domain. ATP contacts are provided by residues 324 to 332 (LGQGGAGSV) and Lys-346. Asp-443 functions as the Proton acceptor in the catalytic mechanism.

It belongs to the protein kinase superfamily. Ser/Thr protein kinase family. CRK subfamily. Expressed in the whole plant at low levels.

The protein resides in the membrane. The enzyme catalyses L-seryl-[protein] + ATP = O-phospho-L-seryl-[protein] + ADP + H(+). It catalyses the reaction L-threonyl-[protein] + ATP = O-phospho-L-threonyl-[protein] + ADP + H(+). In Arabidopsis thaliana (Mouse-ear cress), this protein is Cysteine-rich receptor-like protein kinase 1.